A 315-amino-acid chain; its full sequence is GTP cyclohydrolase MptA (315 aa).

It belongs to the GTP cyclohydrolase IV family. Homodimer. The cofactor is Fe(2+).

It carries out the reaction GTP + H2O = 7,8-dihydroneopterin 2',3'-cyclic phosphate + formate + diphosphate + H(+). It participates in cofactor biosynthesis; 5,6,7,8-tetrahydromethanopterin biosynthesis. Functionally, converts GTP to 7,8-dihydro-D-neopterin 2',3'-cyclic phosphate, the first intermediate in the biosynthesis of coenzyme methanopterin. This chain is GTP cyclohydrolase MptA, found in Methanococcus maripaludis (strain C6 / ATCC BAA-1332).